Consider the following 37-residue polypeptide: Large ribosomal subunit protein bL36 (37 aa).

It belongs to the bacterial ribosomal protein bL36 family.

The polypeptide is Large ribosomal subunit protein bL36 (Janthinobacterium sp. (strain Marseille) (Minibacterium massiliensis)).